The sequence spans 319 residues: ATP-dependent 6-phosphofructokinase (319 aa).

An ATP-binding site is contributed by Gly11. 21 to 25 (RAVVR) serves as a coordination point for ADP. ATP is bound by residues 72 to 73 (RC) and 102 to 105 (GDGS). A Mg(2+)-binding site is contributed by Asp103. A substrate-binding site is contributed by 125–127 (TID). Residue Asp127 is the Proton acceptor of the active site. An ADP-binding site is contributed by Arg154. Substrate is bound by residues Arg162 and 169–171 (MGR). ADP contacts are provided by residues 185 to 187 (GAE), Arg211, and 213 to 215 (KKH). Substrate contacts are provided by residues Glu222, Arg243, and 249-252 (HVQR).

It belongs to the phosphofructokinase type A (PFKA) family. ATP-dependent PFK group I subfamily. Prokaryotic clade 'B1' sub-subfamily. As to quaternary structure, homotetramer. Mg(2+) serves as cofactor.

The protein resides in the cytoplasm. It carries out the reaction beta-D-fructose 6-phosphate + ATP = beta-D-fructose 1,6-bisphosphate + ADP + H(+). Its pathway is carbohydrate degradation; glycolysis; D-glyceraldehyde 3-phosphate and glycerone phosphate from D-glucose: step 3/4. Its activity is regulated as follows. Allosterically activated by ADP and other diphosphonucleosides, and allosterically inhibited by phosphoenolpyruvate. Catalyzes the phosphorylation of D-fructose 6-phosphate to fructose 1,6-bisphosphate by ATP, the first committing step of glycolysis. This chain is ATP-dependent 6-phosphofructokinase, found in Bacillus cereus (strain ATCC 14579 / DSM 31 / CCUG 7414 / JCM 2152 / NBRC 15305 / NCIMB 9373 / NCTC 2599 / NRRL B-3711).